The sequence spans 186 residues: Peptide deformylase (186 aa).

Fe cation-binding residues include Cys-99 and His-141. The active site involves Glu-142. Position 145 (His-145) interacts with Fe cation.

It belongs to the polypeptide deformylase family. Fe(2+) is required as a cofactor.

The enzyme catalyses N-terminal N-formyl-L-methionyl-[peptide] + H2O = N-terminal L-methionyl-[peptide] + formate. In terms of biological role, removes the formyl group from the N-terminal Met of newly synthesized proteins. Requires at least a dipeptide for an efficient rate of reaction. N-terminal L-methionine is a prerequisite for activity but the enzyme has broad specificity at other positions. The chain is Peptide deformylase from Chlamydia felis (strain Fe/C-56) (Chlamydophila felis).